A 529-amino-acid chain; its full sequence is Calcium/calmodulin-dependent protein kinase type II subunit gamma (529 aa).

A Protein kinase domain is found at 14–272 (YQLFEELGKG…ADQALKHPWV (259 aa)). Residues 20–28 (LGKGAFSVV) and Lys43 contribute to the ATP site. Asp136 acts as the Proton acceptor in catalysis. Positions 283–292 (HRQETVECLR) are autoinhibitory domain. Phosphothreonine; by autocatalysis occurs at positions 287, 306, and 307. Residues 294 to 316 (FNARRKLKGAILTTMLVSRNFSA) form a calmodulin-binding region. Phosphoserine occurs at positions 311, 334, 349, 352, and 455. The disordered stretch occupies residues 324–353 (KSDGGVKKRKSSSSVHLMPQSNNKNSLVSP). Over residues 342–352 (PQSNNKNSLVS) the composition is skewed to polar residues.

This sequence belongs to the protein kinase superfamily. CAMK Ser/Thr protein kinase family. CaMK subfamily. In terms of assembly, CAMK2 is composed of 4 different chains: alpha (CAMK2A), beta (CAMK2B), gamma (CAMK2G), and delta (CAMK2D). The different isoforms assemble into homo- or heteromultimeric holoenzymes composed of 12 subunits with two hexameric rings stacked one on top of the other. Post-translationally, autophosphorylation of Thr-287 following activation by Ca(2+)/calmodulin. Phosphorylation of Thr-287 locks the kinase into an activated state.

Its subcellular location is the sarcoplasmic reticulum membrane. The catalysed reaction is L-seryl-[protein] + ATP = O-phospho-L-seryl-[protein] + ADP + H(+). The enzyme catalyses L-threonyl-[protein] + ATP = O-phospho-L-threonyl-[protein] + ADP + H(+). With respect to regulation, activated by Ca(2+)/calmodulin. Binding of calmodulin results in conformational change that relieves intrasteric autoinhibition and allows autophosphorylation of Thr-287 which turns the kinase in a constitutively active form and confers to the kinase a Ca(2+)-independent activity. Its function is as follows. Calcium/calmodulin-dependent protein kinase that functions autonomously after Ca(2+)/calmodulin-binding and autophosphorylation, and is involved in sarcoplasmic reticulum Ca(2+) transport in skeletal muscle and may function in dendritic spine and synapse formation and neuronal plasticity. In slow-twitch muscles, is involved in regulation of sarcoplasmic reticulum (SR) Ca(2+) transport and in fast-twitch muscle participates in the control of Ca(2+) release from the SR through phosphorylation of the ryanodine receptor-coupling factor triadin. In the central nervous system, it is involved in the regulation of neurite formation and arborization. It may participate in the promotion of dendritic spine and synapse formation and maintenance of synaptic plasticity which enables long-term potentiation (LTP) and hippocampus-dependent learning. In response to interferon-gamma (IFN-gamma) stimulation, catalyzes phosphorylation of STAT1, stimulating the JAK-STAT signaling pathway. The sequence is that of Calcium/calmodulin-dependent protein kinase type II subunit gamma (Camk2g) from Mus musculus (Mouse).